The primary structure comprises 439 residues: uncharacterized protein (439 aa).

This is an uncharacterized protein from Caenorhabditis elegans.